Consider the following 472-residue polypeptide: 3-isopropylmalate dehydratase large subunit (472 aa).

The [4Fe-4S] cluster site is built by C347, C407, and C410.

The protein belongs to the aconitase/IPM isomerase family. LeuC type 1 subfamily. As to quaternary structure, heterodimer of LeuC and LeuD. Requires [4Fe-4S] cluster as cofactor.

The enzyme catalyses (2R,3S)-3-isopropylmalate = (2S)-2-isopropylmalate. The protein operates within amino-acid biosynthesis; L-leucine biosynthesis; L-leucine from 3-methyl-2-oxobutanoate: step 2/4. Functionally, catalyzes the isomerization between 2-isopropylmalate and 3-isopropylmalate, via the formation of 2-isopropylmaleate. The polypeptide is 3-isopropylmalate dehydratase large subunit (Synechococcus sp. (strain CC9605)).